The primary structure comprises 358 residues: Protein RecA (358 aa).

Position 76 to 83 (76 to 83 (GPESSGKT)) interacts with ATP.

It belongs to the RecA family.

Its subcellular location is the cytoplasm. Its function is as follows. Can catalyze the hydrolysis of ATP in the presence of single-stranded DNA, the ATP-dependent uptake of single-stranded DNA by duplex DNA, and the ATP-dependent hybridization of homologous single-stranded DNAs. It interacts with LexA causing its activation and leading to its autocatalytic cleavage. This chain is Protein RecA, found in Rhodospirillum centenum (strain ATCC 51521 / SW).